The chain runs to 232 residues: Large ribosomal subunit protein uL1 (232 aa).

Belongs to the universal ribosomal protein uL1 family. In terms of assembly, part of the 50S ribosomal subunit.

Functionally, binds directly to 23S rRNA. The L1 stalk is quite mobile in the ribosome, and is involved in E site tRNA release. In terms of biological role, protein L1 is also a translational repressor protein, it controls the translation of the L11 operon by binding to its mRNA. In Bacillus pumilus (strain SAFR-032), this protein is Large ribosomal subunit protein uL1.